The following is a 306-amino-acid chain: uncharacterized protein (306 aa).

The stretch at 277 to 306 forms a coiled coil; that stretch reads TEIIQNYKIANELKKEKQQNKKKNSIELEE.

This is an uncharacterized protein from Saccharolobus islandicus (Sulfolobus islandicus).